The chain runs to 111 residues: MSDTLTRLAAVLEERKNAAPDSSYVASLYHKGLNKILEKVGEESVETIIAAKDAAASGDCQDLIYETADLWFHSLVMLSALGQHPQAVLDELERRFGLSGHAEKAARQPSA.

Belongs to the PRA-PH family.

The protein resides in the cytoplasm. The catalysed reaction is 1-(5-phospho-beta-D-ribosyl)-ATP + H2O = 1-(5-phospho-beta-D-ribosyl)-5'-AMP + diphosphate + H(+). It functions in the pathway amino-acid biosynthesis; L-histidine biosynthesis; L-histidine from 5-phospho-alpha-D-ribose 1-diphosphate: step 2/9. This chain is Phosphoribosyl-ATP pyrophosphatase (hisE), found in Pseudomonas aeruginosa (strain ATCC 15692 / DSM 22644 / CIP 104116 / JCM 14847 / LMG 12228 / 1C / PRS 101 / PAO1).